We begin with the raw amino-acid sequence, 192 residues long: Secreted phosphoprotein 24 (192 aa).

The signal sequence occupies residues 1-18 (MKWCVLMLALLQSLCCSG). 2 disulfides stabilise this stretch: cysteine 82–cysteine 93 and cysteine 106–cysteine 124. The disordered stretch occupies residues 124–192 (CGQDSSSSES…RGDSIGNHLE (69 aa)). The span at 128–137 (SSSSESSSEE) shows a compositional bias: low complexity.

Belongs to the SPP2 family. In terms of processing, multiply phosphorylated at serine residues.

It is found in the secreted. Could coordinate an aspect of bone turnover. The protein is Secreted phosphoprotein 24 (spp2) of Oncorhynchus mykiss (Rainbow trout).